The following is a 506-amino-acid chain: Lysine--tRNA ligase (506 aa).

Residues Glu-416 and Glu-423 each contribute to the Mg(2+) site.

Belongs to the class-II aminoacyl-tRNA synthetase family. In terms of assembly, homodimer. Mg(2+) is required as a cofactor.

The protein localises to the cytoplasm. The catalysed reaction is tRNA(Lys) + L-lysine + ATP = L-lysyl-tRNA(Lys) + AMP + diphosphate. The chain is Lysine--tRNA ligase from Baumannia cicadellinicola subsp. Homalodisca coagulata.